The following is a 109-amino-acid chain: T-cell surface glycoprotein CD1b (109 aa).

The signal sequence occupies residues 1-18; that stretch reads MLLLPLLLLAGRFPGGDN. Residues Asn38 and Asn75 are each glycosylated (N-linked (GlcNAc...) asparagine).

Heterodimer with B2M (beta-2-microglobulin). Interacts with saposin C. As to expression, expressed on cortical thymocytes, on certain T-cell leukemias, and in various other tissues.

The protein resides in the cell membrane. It localises to the endosome membrane. Its subcellular location is the lysosome membrane. Antigen-presenting protein that binds self and non-self lipid and glycolipid antigens and presents them to T-cell receptors on natural killer T-cells. The sequence is that of T-cell surface glycoprotein CD1b (CD1B) from Oryctolagus cuniculus (Rabbit).